The sequence spans 155 residues: Small ribosomal subunit protein uS7c (155 aa).

The protein belongs to the universal ribosomal protein uS7 family. As to quaternary structure, part of the 30S ribosomal subunit.

It is found in the plastid. The protein resides in the chloroplast. One of the primary rRNA binding proteins, it binds directly to 16S rRNA where it nucleates assembly of the head domain of the 30S subunit. This is Small ribosomal subunit protein uS7c (rps7) from Ananas comosus (Pineapple).